Consider the following 1220-residue polypeptide: Formin-F (1220 aa).

Residues 1–10 are compositionally biased toward basic residues; sequence MNRIFGRKKK. The segment at 1–62 is disordered; that stretch reads MNRIFGRKKK…TNSKSADKFD (62 aa). One can recognise a GBD/FH3 domain in the interval 6–373; sequence GRKKKDKDSD…QISVNKPMIG (368 aa). Basic and acidic residues predominate over residues 11-20; the sequence is DKDSDEKGST. Residues 41 to 56 are compositionally biased toward polar residues; that stretch reads AYSSLQPDGNNSTNSK. The stretch at 392-428 forms a coiled coil; it reads VALQSEFQKNIEELAKVKDQLKKANFDLNIANQELSS. Disordered regions lie at residues 461 to 659, 711 to 732, and 1049 to 1192; these read IDSN…KFTV, SQKKLEASDKKSTSSTKPGTVS, and DEAK…KKDI. Low complexity-rich tracts occupy residues 501–518 and 525–554; these read SKPPLNPKSSKPPISSSQ and SNLSSSSSDSLSNDFKSQVEVAQQQQPQQQ. The FH1 domain maps to 532–655; that stretch reads SDSLSNDFKS…NSNKPPANAP (124 aa). A compositionally biased stretch (polar residues) spans 555–564; that stretch reads NIESTLTPEP. The span at 575–638 shows a compositional bias: pro residues; that stretch reads TTPPPAPPAP…GKGGPPPPPG (64 aa). An FH2 domain is found at 656–1054; the sequence is KFTVSKPTTK…AIKRDEAKAK (399 aa). Residues 711–722 show a composition bias toward basic and acidic residues; that stretch reads SQKKLEASDKKS. A coiled-coil region spans residues 1032 to 1062; that stretch reads YKDFQRDKEAAERAIKRDEAKAKKAQQLKRM. A compositionally biased stretch (polar residues) spans 1066 to 1083; the sequence is IASSTNNKNPLASSSTSV. Residues 1083 to 1158 enclose the DAD domain; that stretch reads VGDGGMVEDI…TPSKSGSRRE (76 aa). Residues 1117 to 1142 show a composition bias toward low complexity; the sequence is DSSSITTISEQSENSNTSSITITTPS. Residues 1161–1192 show a composition bias toward basic and acidic residues; the sequence is TSKSSDKDKEKEKEKEKQCESTESEDINKKDI.

This sequence belongs to the formin homology family. Diaphanous subfamily. As to quaternary structure, interacts (via GBD/FH3 domain) with activated Rho-GTPases.

Its function is as follows. Formins play an important role in the nucleation of actin and the formation of linear actin filaments. The sequence is that of Formin-F (forF) from Dictyostelium discoideum (Social amoeba).